The sequence spans 72 residues: Translation initiation factor IF-1 (72 aa).

In terms of domain architecture, S1-like spans 1–72 (MAKEDTLEFP…TKGRINYRFK (72 aa)).

This sequence belongs to the IF-1 family. As to quaternary structure, component of the 30S ribosomal translation pre-initiation complex which assembles on the 30S ribosome in the order IF-2 and IF-3, IF-1 and N-formylmethionyl-tRNA(fMet); mRNA recruitment can occur at any time during PIC assembly.

It localises to the cytoplasm. One of the essential components for the initiation of protein synthesis. Stabilizes the binding of IF-2 and IF-3 on the 30S subunit to which N-formylmethionyl-tRNA(fMet) subsequently binds. Helps modulate mRNA selection, yielding the 30S pre-initiation complex (PIC). Upon addition of the 50S ribosomal subunit IF-1, IF-2 and IF-3 are released leaving the mature 70S translation initiation complex. This chain is Translation initiation factor IF-1, found in Ruegeria sp. (strain TM1040) (Silicibacter sp.).